Reading from the N-terminus, the 1268-residue chain is Vigilin (1268 aa).

An N-acetylserine modification is found at serine 2. At threonine 8 the chain carries Phosphothreonine. Serine 11, serine 31, and serine 35 each carry phosphoserine. KH domains lie at 158–229 (PKEH…RLEV), 230–302 (EKAF…AVEV), 303–371 (KKSQ…SVAA), 372–442 (PSWL…EINI), 443–514 (DHKF…DLII), 515–588 (EQRF…SVPI), 589–660 (FKQF…EVSI), 661–734 (PAKL…DIRA), 735–807 (KPEY…SMLV), 808–880 (DPKH…ECAI), 881–979 (PQKF…EVEV), 980–1059 (PFDL…SVTV), 1060–1134 (DPKY…DVPL), and 1135–1209 (DHRV…ALQV). A phosphothreonine mark is found at threonine 295 and threonine 296. Serine 317 is subject to Phosphoserine. Tyrosine 437 is subject to Phosphotyrosine. The residue at position 645 (serine 645) is a Phosphoserine. The tract at residues 914–944 (ENAVHSTEPVVQENGDEAGEGREAKDCDPGS) is disordered. Residues 932 to 944 (GEGREAKDCDPGS) are compositionally biased toward basic and acidic residues. Lysine 991 carries the N6-acetyllysine modification. A disordered region spans residues 1233-1268 (WTASSSEKAPDMSSSEEFPSFGAQVAPKTLPWGPKR). Residues 1234–1249 (TASSSEKAPDMSSSEE) are compositionally biased toward polar residues. Serine 1247 and serine 1252 each carry phosphoserine.

The protein localises to the cytoplasm. Its subcellular location is the nucleus. Appears to play a role in cell sterol metabolism. It may function to protect cells from over-accumulation of cholesterol. The protein is Vigilin (HDLBP) of Homo sapiens (Human).